The following is a 261-amino-acid chain: 3-methyl-2-oxobutanoate hydroxymethyltransferase (261 aa).

Mg(2+) is bound by residues aspartate 42 and aspartate 81. 3-methyl-2-oxobutanoate contacts are provided by residues 42–43, aspartate 81, and lysine 110; that span reads DS. Mg(2+) is bound at residue glutamate 112. The Proton acceptor role is filled by glutamate 179.

The protein belongs to the PanB family. As to quaternary structure, homodecamer; pentamer of dimers. Requires Mg(2+) as cofactor.

The protein resides in the cytoplasm. It catalyses the reaction 3-methyl-2-oxobutanoate + (6R)-5,10-methylene-5,6,7,8-tetrahydrofolate + H2O = 2-dehydropantoate + (6S)-5,6,7,8-tetrahydrofolate. It functions in the pathway cofactor biosynthesis; (R)-pantothenate biosynthesis; (R)-pantoate from 3-methyl-2-oxobutanoate: step 1/2. Functionally, catalyzes the reversible reaction in which hydroxymethyl group from 5,10-methylenetetrahydrofolate is transferred onto alpha-ketoisovalerate to form ketopantoate. This is 3-methyl-2-oxobutanoate hydroxymethyltransferase from Thermus thermophilus (strain ATCC BAA-163 / DSM 7039 / HB27).